A 177-amino-acid polypeptide reads, in one-letter code: NADH-quinone oxidoreductase subunit B (177 aa).

[4Fe-4S] cluster contacts are provided by Cys-36, Cys-37, Cys-101, and Cys-130.

The protein belongs to the complex I 20 kDa subunit family. As to quaternary structure, NDH-1 is composed of 14 different subunits. Subunits NuoB, C, D, E, F, and G constitute the peripheral sector of the complex. [4Fe-4S] cluster serves as cofactor.

The protein localises to the cell inner membrane. The enzyme catalyses a quinone + NADH + 5 H(+)(in) = a quinol + NAD(+) + 4 H(+)(out). Its function is as follows. NDH-1 shuttles electrons from NADH, via FMN and iron-sulfur (Fe-S) centers, to quinones in the respiratory chain. The immediate electron acceptor for the enzyme in this species is believed to be ubiquinone. Couples the redox reaction to proton translocation (for every two electrons transferred, four hydrogen ions are translocated across the cytoplasmic membrane), and thus conserves the redox energy in a proton gradient. The sequence is that of NADH-quinone oxidoreductase subunit B from Hydrogenobaculum sp. (strain Y04AAS1).